A 278-amino-acid polypeptide reads, in one-letter code: Short-chain dehydrogenase/reductase eupG (278 aa).

The NADP(+) site is built by Leu19, Asp71, and Asn98. Ser155 functions as the Proton donor in the catalytic mechanism. 3 residues coordinate NADP(+): Tyr188, Lys192, and Thr223. Tyr188 serves as the catalytic Proton acceptor. The active-site Lowers pKa of active site Tyr is the Lys192.

It belongs to the short-chain dehydrogenases/reductases (SDR) family.

Its pathway is secondary metabolite biosynthesis; terpenoid biosynthesis. Functionally, short-chain dehydrogenase/reductase; part of the gene cluster that mediates the biosynthesis of eupenifeldin, a bistropolone meroterpenoid that acts as an antitumor agent. The first step of eupenifeldin biosynthesis is the biosynthesis of 3-methylorcinaldehyde performed by the non-reducing polyketide synthase eupA. Oxidative dearomatization of 3-methylorcinaldehyde likely catalyzed by the FAD-dependent monooxygenase eupB is followed by oxidative ring expansion by the 2-oxoglutarate-dependent dioxygenase eupC to provide the first tropolone metabolite, tropolone stipitaldehyde. In parallel, generation of sesquiterpene alpha-humulene from farnesylpyrophosphate (FPP) is catalyzed by the terpene cyclase eupE. The cytochrome P450 monooxygenase eupD then hydroxylates humulene to humulenol. The putative Diels-Alderase eupF probably catalyzes the formation of the tropolone-humulene skeleton by linking humulenol and the polyketide moiety. The short-chain dehydrogenase/reductase eupG and the flavin-dependent monooxygenase eupH are also essential for eupenifeldin biosynthesis and are likely the additional decorating enzymes of the tropolone-humulene skeleton to produce final eupenifeldin or derivatives. This Phoma sp protein is Short-chain dehydrogenase/reductase eupG.